The sequence spans 159 residues: Ribosomal RNA large subunit methyltransferase H (159 aa).

Residues Leu76 and Gly108 each coordinate S-adenosyl-L-methionine.

This sequence belongs to the RNA methyltransferase RlmH family. In terms of assembly, homodimer.

The protein resides in the cytoplasm. The enzyme catalyses pseudouridine(1915) in 23S rRNA + S-adenosyl-L-methionine = N(3)-methylpseudouridine(1915) in 23S rRNA + S-adenosyl-L-homocysteine + H(+). Specifically methylates the pseudouridine at position 1915 (m3Psi1915) in 23S rRNA. In Limosilactobacillus fermentum (strain NBRC 3956 / LMG 18251) (Lactobacillus fermentum), this protein is Ribosomal RNA large subunit methyltransferase H.